Here is a 269-residue protein sequence, read N- to C-terminus: 4-hydroxy-tetrahydrodipicolinate reductase (269 aa).

Residue 9 to 14 coordinates NAD(+); the sequence is GVAGRM. NADP(+) is bound at residue arginine 36. Residues 99 to 101 and 123 to 126 contribute to the NAD(+) site; these read GTT and APNM. Histidine 156 acts as the Proton donor/acceptor in catalysis. Histidine 157 provides a ligand contact to (S)-2,3,4,5-tetrahydrodipicolinate. Lysine 160 serves as the catalytic Proton donor. A (S)-2,3,4,5-tetrahydrodipicolinate-binding site is contributed by 166 to 167; sequence GT.

This sequence belongs to the DapB family.

The protein localises to the cytoplasm. The enzyme catalyses (S)-2,3,4,5-tetrahydrodipicolinate + NAD(+) + H2O = (2S,4S)-4-hydroxy-2,3,4,5-tetrahydrodipicolinate + NADH + H(+). It carries out the reaction (S)-2,3,4,5-tetrahydrodipicolinate + NADP(+) + H2O = (2S,4S)-4-hydroxy-2,3,4,5-tetrahydrodipicolinate + NADPH + H(+). The protein operates within amino-acid biosynthesis; L-lysine biosynthesis via DAP pathway; (S)-tetrahydrodipicolinate from L-aspartate: step 4/4. Catalyzes the conversion of 4-hydroxy-tetrahydrodipicolinate (HTPA) to tetrahydrodipicolinate. This is 4-hydroxy-tetrahydrodipicolinate reductase from Methylococcus capsulatus (strain ATCC 33009 / NCIMB 11132 / Bath).